The primary structure comprises 278 residues: Neuronal membrane glycoprotein M6-a (278 aa).

The residue at position 1 (M1) is an N-acetylmethionine. Over 1–22 (MEENMEEGQTQKGCFECCIKCL) the chain is Cytoplasmic. Residues 23–43 (GGIPYASLIATILLYAGVALF) traverse the membrane as a helical segment. Residues 44–84 (CGCGHEALSGTVNILQTYFELARTAGDTLDVFTMIDIFKYV) are Extracellular-facing. The chain crosses the membrane as a helical span at residues 85-105 (IYGIAAAFFVYGILLMVEGFF). Residues 106–127 (TTGAIKDLYGDFKITTCGRCVS) are Cytoplasmic-facing. The chain crosses the membrane as a helical span at residues 128-148 (AWFIMLTYLFMLAWLGVTAFT). Residues 149-213 (SLPVYMYFNV…STELNMTFHL (65 aa)) are Extracellular-facing. N-linked (GlcNAc...) asparagine glycosylation occurs at N164. The cysteines at positions 174 and 192 are disulfide-linked. N208 carries N-linked (GlcNAc...) asparagine glycosylation. The chain crosses the membrane as a helical span at residues 214–234 (FIVALAGAGAAVIAMVHYLMV). Residues 235–278 (LSANWAYVKDACRMQKYEDIKSKEEQELHDIHSTRSKERLNAYT) lie on the Cytoplasmic side of the membrane. At S256 the chain carries Phosphoserine. The residue at position 278 (T278) is a Phosphothreonine.

It belongs to the myelin proteolipid protein family. Interacts with OPRM1. Interacts with palmitoyltransferase ZDHHC17/HIP14; the interaction leads to palmitoylation of GPM6A. In terms of processing, N-glycosylated. Palmitoylated by ZDHHC17/HIP14. As to expression, widely expressed in the CNS. Found especially in the granule cell layer of the cerebellum but not in the molecular layer or white matter. Expressed in the immature embryonic retina including the nerve fiber layer (NFL), inner plexiform layer (IPL), and outer plexiform layer (OPL). Weakly expressed in processes of Mueller glia cells.

The protein localises to the cell membrane. It localises to the cell projection. It is found in the axon. The protein resides in the growth cone. Its subcellular location is the dendritic spine. The protein localises to the filopodium. It localises to the neuron projection. In terms of biological role, involved in neuronal differentiation, including differentiation and migration of neuronal stem cells. Plays a role in neuronal plasticity and is involved in neurite and filopodia outgrowth, filopodia motility and probably synapse formation. Gpm6a-induced filopodia formation involves mitogen-activated protein kinase (MAPK) and Src signaling pathways. Conflictingly, PubMed:22162747 reports that induced cellular protrusions are simple membrane-wrapped tubules without actin or tubulin-based cytoskeletons and with Gpm6a gliding along membrane edges indicative for a function in actin-independent membrane deformation. May be involved in neuronal NGF-dependent Ca(2+) influx. May be involved in regulation of endocytosis and intracellular trafficking of G-protein-coupled receptors (GPCRs); enhances internalization and recycling of mu-type opioid receptor. The sequence is that of Neuronal membrane glycoprotein M6-a (Gpm6a) from Mus musculus (Mouse).